A 331-amino-acid chain; its full sequence is UDP-GalNAc:beta-1,3-N-acetylgalactosaminyltransferase 1 (331 aa).

The Cytoplasmic portion of the chain corresponds to 1–20 (MAPAVLTAIPNRMSLRSLKW). Residues 21-43 (SLLLLSLLSFLVIWYLSLPHYNV) traverse the membrane as a helical; Signal-anchor for type II membrane protein segment. Residues 44–331 (IERVNWMYFY…VMLRNTTCHY (288 aa)) are Lumenal-facing. Asn-72, Asn-154, Asn-198, Asn-212, and Asn-326 each carry an N-linked (GlcNAc...) asparagine glycan.

It belongs to the glycosyltransferase 31 family. It depends on Mg(2+) as a cofactor.

The protein localises to the golgi apparatus membrane. The enzyme catalyses a globoside Gb3Cer (d18:1(4E)) + UDP-N-acetyl-alpha-D-galactosamine = a globoside Gb4Cer (d18:1(4E)) + UDP + H(+). The protein operates within protein modification; protein glycosylation. Functionally, transfers N-acetylgalactosamine onto globotriaosylceramide. Plays a critical role in preimplantation stage embryonic development. This Rattus norvegicus (Rat) protein is UDP-GalNAc:beta-1,3-N-acetylgalactosaminyltransferase 1 (B3galnt1).